The chain runs to 140 residues: Organic hydroperoxide resistance protein-like (140 aa).

It belongs to the OsmC/Ohr family.

The protein is Organic hydroperoxide resistance protein-like of Staphylococcus aureus (strain bovine RF122 / ET3-1).